Reading from the N-terminus, the 561-residue chain is Putative transport protein YbjL (561 aa).

The next 5 helical transmembrane spans lie at 8–28 (LLNG…LCLG), 32–52 (LGSI…LLGQ), 66–86 (FMLF…SIFF), 94–114 (MLAL…GKLF), and 158–178 (NLSL…IVGA). RCK C-terminal domains lie at 200 to 288 (RGLD…SFRN) and 292 to 373 (VFDR…RIGF). 5 consecutive transmembrane segments (helical) span residues 383-403 (LLAF…TFQF), 406-426 (FSFG…LGFM), 451-471 (VFMA…LGAI), 475-495 (MLIA…LFGA), and 540-560 (AIAN…WPGL).

The protein belongs to the AAE transporter (TC 2.A.81) family. YbjL subfamily.

The protein resides in the cell membrane. This is Putative transport protein YbjL from Shigella flexneri.